Here is a 1804-residue protein sequence, read N- to C-terminus: Collagen alpha-1(XI) chain (1804 aa).

A signal peptide spans 1–34 (MEPWSRWKTKRWIWDLTISTLVLTFLFQAREVRG). Positions 35–511 (AAPVDILKAL…SKGPTISAQE (477 aa)) are cleaved as a propeptide — N-terminal propeptide. Intrachain disulfides connect cysteine 60–cysteine 242 and cysteine 181–cysteine 235. The 173-residue stretch at 70–242 (DIAYRVTEEA…DYCDHYSPDC (173 aa)) folds into the Laminin G-like domain. Residues 229 to 417 (KAAYDYCDHY…DFTETSINGH (189 aa)) are nonhelical region. Residue asparagine 351 is glycosylated (N-linked (GlcNAc...) asparagine). A triple-helical region (interrupted) region spans residues 418–506 (GAYGEKGQKG…YGGDGSKGPT (89 aa)). The segment at 437–506 (LVEGPPGPAG…YGGDGSKGPT (70 aa)) is disordered. The Collagen-like 1 domain maps to 440–488 (GPPGPAGPAGLMGPPGLQGPSGLPGDPGDRGPPGRPGLPGADGLPGPPG). 2 stretches are compositionally biased toward low complexity: residues 447–465 (PAGL…LPGD) and 477–494 (LPGA…LMLP). A short nonhelical segment region spans residues 507–509 (ISA). A telopeptide region spans residues 510-527 (QEAQAQAILQQARIALRG). Positions 526–1560 (RGPPGPMGLT…KTRRHTESIQ (1035 aa)) are disordered. Residues 528–1540 (PPGPMGLTGR…PGPPGPPGEV (1013 aa)) form a triple-helical region region. Collagen-like domains lie at 530–584 (GPMG…GADG), 581–639 (GADG…EIGP), 607–664 (PGDK…PGQP), and 641–698 (GLPG…GPQG). Gly residues-rich tracts occupy residues 539-548 (GPVGGPGSAG) and 581-590 (GADGGRGMPG). Lysine 610 bears the Allysine mark. The segment covering 639–655 (PRGLPGEAGPRGLLGPR) has biased composition (low complexity). The span at 697 to 708 (QGLPGPQGPIGP) shows a compositional bias: pro residues. Residues 715–726 (QGKPGLAGLPGA) are compositionally biased toward low complexity. Residues 746–804 (GPPGPQGPIGYPGPRGVKGADGVRGLKGSKGEKGEDGFPGFKGDMGLKGDRGEVGQVGP) enclose the Collagen-like 6 domain. Residues 805–814 (RGEDGPEGPK) show a composition bias toward basic and acidic residues. 3 stretches are compositionally biased toward low complexity: residues 873–901 (KPGP…PGPK), 916–925 (RGPQGPQGPV), and 969–979 (PQGPTGETGPI). Over residues 1040 to 1049 (GLKGGEGPQG) the composition is skewed to gly residues. Residues 1074–1083 (RPGPQGPPGP) show a composition bias toward pro residues. The segment covering 1084-1108 (AGEKGAPGEKGPQGPAGRDGVQGPV) has biased composition (low complexity). Over residues 1160 to 1169 (GIAGGDGEAG) the composition is skewed to gly residues. 2 stretches are compositionally biased toward pro residues: residues 1216 to 1227 (MGPPGPPGPRGP) and 1341 to 1360 (QPGP…PGKR). Composition is skewed to low complexity over residues 1383–1392 (AEGPPGKTGP) and 1417–1426 (QGLPGAAGQD). 3 Collagen-like domains span residues 1391-1449 (GPVG…SKGE), 1442-1492 (GDPG…PGPA), and 1481-1539 (GAKG…PPGE). Positions 1428–1437 (PPGPLGPPGL) are enriched in pro residues. Lysine 1450 carries the allysine modification. Residues 1453–1462 (PGLIGLIGPP) are compositionally biased toward low complexity. Residues 1481 to 1490 (GAKGDGGIPG) show a composition bias toward gly residues. The span at 1491–1507 (PAGPIGPPGPPGLPGPA) shows a compositional bias: pro residues. A compositionally biased stretch (low complexity) spans 1509-1519 (PKGNKGSSGPT). Residues 1528–1537 (PGPPGPPGPP) are compositionally biased toward pro residues. Positions 1541–1561 (IQPLPILSPKKTRRHTESIQA) are nonhelical region (C-terminal). Residues 1562–1804 (DAGDNILDYS…FEVGPACFLG (243 aa)) constitute a propeptide, C-terminal propeptide. Residues 1575–1803 (EEIFGSLNSL…GFEVGPACFL (229 aa)) enclose the Fibrillar collagen NC1 domain. A disulfide bridge connects residues cysteine 1605 and cysteine 1637. Residues aspartate 1623, asparagine 1625, glutamine 1626, cysteine 1628, and aspartate 1631 each contribute to the Ca(2+) site. 2 N-linked (GlcNAc...) asparagine glycosylation sites follow: asparagine 1638 and asparagine 1707. Disulfide bonds link cysteine 1646–cysteine 1801 and cysteine 1712–cysteine 1755.

Belongs to the fibrillar collagen family. In terms of assembly, trimers composed of three different chains: alpha 1(XI), alpha 2(XI), and alpha 3(XI). Alpha 3(XI) is probably a post-translational modification of alpha 1(II). In terms of processing, prolines at the third position of the tripeptide repeating unit (G-X-Y) are hydroxylated in some or all of the chains. Post-translationally, N-glycosylated.

The protein localises to the secreted. Its subcellular location is the extracellular space. It is found in the extracellular matrix. In terms of biological role, may play an important role in fibrillogenesis by controlling lateral growth of collagen II fibrils. The chain is Collagen alpha-1(XI) chain (Col11a1) from Rattus norvegicus (Rat).